Here is a 192-residue protein sequence, read N- to C-terminus: ADP-ribosylation factor-like protein 14 (192 aa).

G2 carries N-myristoyl glycine lipidation. Residues 20 to 27 (GLDSAGKS), 64 to 68 (DVGGQ), and 123 to 126 (NKQD) each bind GTP.

It belongs to the small GTPase superfamily. Arf family. Interacts with ARL14EP. As to expression, expressed in immature dendritic cells.

Its subcellular location is the cytoplasmic vesicle. In terms of biological role, GTPase that recruits MYO1E to MHC class II-containing vesicles via the effector protein ARL14EP and hence controls the movement of these vesicles along the actin cytoskeleton in dendritic cells. This is ADP-ribosylation factor-like protein 14 (ARL14) from Homo sapiens (Human).